Consider the following 508-residue polypeptide: MRSFLYMLSQRPKLACLCGKSIIIWPGKRTNLPENAFTQRMLQECGQMAKPDASVDLDNFKAISEQSPAEFGIDSCRVKAQPEDRSDRIREQIASAYPVIHERTLLLFISFLEHKLTFGSEQEKAIYKDMTVVDLVQRLLAKRCVWFFGANDYYRTMQGNIGNEGFEAVGTPAEKEPLTLTSVLSYDEIKLSALLYVSCHSEFINNGSRVNGGEVLQNKDTIEREGVVIGLIGARFERPDVMEYQDIMITKTQNTEANGYGFDLEQISSETVTPASDLRRIWREFYEEPRDFIYADTPYDTTRFEEVSQGIFDHQVMRKRYAISFDTLLLEAQDRAFKAGKPAYIHVVGIGLGVWKAARQQERTFLESFEGRLRALGERLSHIGVVHFSWFHLACVGSLHDGAIIPVDKHPQGGIRIRNSVRNPGDKLTEDMLPVVTYAWDGNALPGNEFWANMLISTGDPAAACSTLISELQNPHINVHYMNGANLHIASVEHGLLHVGDYARRLIV.

Arg-209, Gly-349, Gly-351, Gly-353, Val-354, Trp-355, Trp-390, Asp-441, Asn-448, Glu-449, Gly-459, and Asp-460 together coordinate ADP-D-ribose.

It catalyses the reaction N(omega)-(ADP-D-ribosyl)-L-arginyl-[protein] + H2O = ADP-D-ribose + L-arginyl-[protein]. The enzyme catalyses N(omega)-(ADP-D-ribosyl)-L-arginine + H2O = ADP-D-ribose + L-arginine. Protein ADP-ribosyl hydrolase that specifically removes mono-ADP-ribosyl modifications from protein arginine residues. This is ADP-ribosylarginine hydrolase CG3568 from Drosophila melanogaster (Fruit fly).